A 471-amino-acid chain; its full sequence is Alpha-galactosidase (471 aa).

The first 18 residues, 1 to 18 (MFNLNFFNYTCHCEWCFW), serve as a signal peptide directing secretion. Cysteines 42 and 74 form a disulfide. N-linked (GlcNAc...) asparagine glycosylation is present at asparagine 43. Residues aspartate 72 and aspartate 73 each contribute to the substrate site. An N-linked (GlcNAc...) asparagine glycan is attached at asparagine 105. Cysteine 121 and cysteine 151 are oxidised to a cystine. Lysine 147 serves as a coordination point for substrate. Residue aspartate 149 is the Nucleophile of the active site. N-linked (GlcNAc...) asparagine glycosylation occurs at asparagine 175. Arginine 205 contacts substrate. Aspartate 209 serves as the catalytic Proton donor. 2 disulfide bridges follow: cysteine 221/cysteine 237 and cysteine 223/cysteine 230. Position 251 (glutamine 251) interacts with substrate. 6 N-linked (GlcNAc...) asparagine glycosylation sites follow: asparagine 270, asparagine 370, asparagine 403, asparagine 417, asparagine 422, and asparagine 454.

This sequence belongs to the glycosyl hydrolase 27 family. In terms of assembly, homotetramer.

The protein localises to the secreted. The enzyme catalyses Hydrolysis of terminal, non-reducing alpha-D-galactose residues in alpha-D-galactosides, including galactose oligosaccharides, galactomannans and galactolipids.. In Saccharomyces paradoxus (Yeast), this protein is Alpha-galactosidase (MEL).